Consider the following 81-residue polypeptide: uncharacterized protein (81 aa).

2 helical membrane passes run 1 to 21 (MTLF…FSLL) and 27 to 47 (IFIY…HHFF).

It is found in the membrane. This is an uncharacterized protein from Saccharomyces cerevisiae (strain ATCC 204508 / S288c) (Baker's yeast).